The chain runs to 261 residues: Putative quercetin 2,3-dioxygenase Ta0133 (261 aa).

Residues H17, H19, H61, and E63 each contribute to the a divalent metal cation site.

Belongs to the pirin family. It depends on a divalent metal cation as a cofactor.

The catalysed reaction is quercetin + O2 = 2-(3,4-dihydroxybenzoyloxy)-4,6-dihydroxybenzoate + CO. Its pathway is flavonoid metabolism; quercetin degradation. In terms of biological role, putative quercetin 2,3-dioxygenase. The polypeptide is Putative quercetin 2,3-dioxygenase Ta0133 (Thermoplasma acidophilum (strain ATCC 25905 / DSM 1728 / JCM 9062 / NBRC 15155 / AMRC-C165)).